A 177-amino-acid polypeptide reads, in one-letter code: Bifunctional protein PyrR (177 aa).

The PRPP-binding signature appears at valine 99–threonine 111.

It belongs to the purine/pyrimidine phosphoribosyltransferase family. PyrR subfamily.

The catalysed reaction is UMP + diphosphate = 5-phospho-alpha-D-ribose 1-diphosphate + uracil. Regulates the transcription of the pyrimidine nucleotide (pyr) operon in response to exogenous pyrimidines. Functionally, also displays a weak uracil phosphoribosyltransferase activity which is not physiologically significant. The chain is Bifunctional protein PyrR from Gloeothece citriformis (strain PCC 7424) (Cyanothece sp. (strain PCC 7424)).